Reading from the N-terminus, the 103-residue chain is SLC35A4 upstream open reading frame protein (103 aa).

A helical transmembrane segment spans residues 62 to 84; that stretch reads ASAVLGFAVGTCTGIYAAQAYAV.

It is found in the mitochondrion inner membrane. Functionally, required to maintain cellular respiration. In Homo sapiens (Human), this protein is SLC35A4 upstream open reading frame protein.